A 69-amino-acid polypeptide reads, in one-letter code: DNA-directed RNA polymerase subunit omega (69 aa).

This sequence belongs to the RNA polymerase subunit omega family. As to quaternary structure, the RNAP catalytic core consists of 2 alpha, 1 beta, 1 beta' and 1 omega subunit. When a sigma factor is associated with the core the holoenzyme is formed, which can initiate transcription.

The catalysed reaction is RNA(n) + a ribonucleoside 5'-triphosphate = RNA(n+1) + diphosphate. Its function is as follows. Promotes RNA polymerase assembly. Latches the N- and C-terminal regions of the beta' subunit thereby facilitating its interaction with the beta and alpha subunits. The polypeptide is DNA-directed RNA polymerase subunit omega (Pelotomaculum thermopropionicum (strain DSM 13744 / JCM 10971 / SI)).